The chain runs to 744 residues: Polyadenylate-binding protein, cytoplasmic and nuclear (744 aa).

Polar residues predominate over residues 1–11; sequence MSEVANSTSPV. Positions 1-42 are disordered; the sequence is MSEVANSTSPVQDGADANGAQINTNVPAASGDAPTPTTAAQQ. The span at 33–42 shows a compositional bias: low complexity; sequence APTPTTAAQQ. RRM domains are found at residues 48–126, 136–213, 229–306, and 332–462; these read ASLY…WSQR, GNVF…HHIP, TNIY…RAQK, and VNLY…LAQR. 4 disordered regions span residues 368–411, 527–550, 607–651, and 723–744; these read EEKK…AGDK, GRGAGFPGGMPGQQGGRGGPNAQQ, IAGG…PGVD, and VKNKEGDGEKEAPKEESKEEKA. Positions 376 to 397 are enriched in basic and acidic residues; the sequence is KEVKEEKKEDEKKEDEEAKEGS. Gly residues-rich tracts occupy residues 527–545, 609–632, and 640–649; these read GRGAGFPGGMPGQQGGRGG, GGPGIRGGQGGFPQGGRGAPGGRG, and PQGGRPGGPG. Residues 647 to 724 enclose the PABC domain; it reads GPGVDMSVLS…AMSVYDEYVK (78 aa).

Belongs to the polyadenylate-binding protein type-1 family.

It is found in the cytoplasm. Its subcellular location is the nucleus. Functionally, binds the poly(A) tail of mRNA. Appears to be an important mediator of the multiple roles of the poly(A) tail in mRNA biogenesis, stability and translation. In the nucleus, involved in both mRNA cleavage and polyadenylation. Is also required for efficient mRNA export to the cytoplasm. Acts in concert with a poly(A)-specific nuclease (PAN) to affect poly(A) tail shortening, which may occur concomitantly with either nucleocytoplasmic mRNA transport or translational initiation. In the cytoplasm, stimulates translation initiation and regulates mRNA decay through translation termination-coupled poly(A) shortening, probably mediated by PAN. The protein is Polyadenylate-binding protein, cytoplasmic and nuclear (PAB1) of Phaeosphaeria nodorum (strain SN15 / ATCC MYA-4574 / FGSC 10173) (Glume blotch fungus).